Reading from the N-terminus, the 441-residue chain is MSVSDELFAEALKVMPGGVSSPVRAYRSVGGTPRFVKRALGSHIVDVDDKRYVDLVCSWGPMIAGHAHPEVVAAVLQAVADSTSFGAPSEVELRLAQAVVARMGGAIDKVRFTCSGTEAVMTAARLARGITKRPLLVKFVGCYHGHSDSFLVSAGSGVASLGLPDSPGVPKEVAGDTVALPYGRIDMVEELFAERGDQVAAIVTEGVPANMGVIVPPEGFNRRLHDIAHAHGALLIQDEVLTGFRLSPTGAWGLQGAKEGWTPDLFTFGKVIGGGMPLAAVGGSAQLMDYLAPEGPVYQAGTLSGNPAACAAGLATLALMDDAAYSRLDATADRVSAMADAALESAGVPHRINKVSNLFSVFLTDAPVTDFASASKQDTKAFSRFFHAALDAGLWLAPSGFEAWFCSTALDDDDLEVIDAGLHKAAQAAAQGLSSLEDVRR.

K270 carries the N6-(pyridoxal phosphate)lysine modification.

This sequence belongs to the class-III pyridoxal-phosphate-dependent aminotransferase family. HemL subfamily. In terms of assembly, homodimer. Pyridoxal 5'-phosphate is required as a cofactor.

It is found in the cytoplasm. The catalysed reaction is (S)-4-amino-5-oxopentanoate = 5-aminolevulinate. It functions in the pathway porphyrin-containing compound metabolism; protoporphyrin-IX biosynthesis; 5-aminolevulinate from L-glutamyl-tRNA(Glu): step 2/2. This chain is Glutamate-1-semialdehyde 2,1-aminomutase (hemL), found in Propionibacterium freudenreichii subsp. freudenreichii.